A 106-amino-acid polypeptide reads, in one-letter code: Hydrogenase expression/formation protein HoxL (106 aa).

Belongs to the HupF/HypC family.

The sequence is that of Hydrogenase expression/formation protein HoxL (hoxL) from Azotobacter vinelandii.